The chain runs to 515 residues: Signal transduction histidine-protein kinase/phosphatase MprB (515 aa).

Over 1–24 (MTLPPQPSRLKPPRNTSSLSLRWR) the chain is Cytoplasmic. The helical transmembrane segment at 25–45 (VMLLAMSMVAMVVVLMSVAVY) threads the bilayer. At 46 to 165 (AVVSRALYDD…TGQVLGRLGT (120 aa)) the chain is on the extracellular side. The chain crosses the membrane as a helical span at residues 166–186 (VLLIVGGVGVAVAAIAGGMVA). In terms of domain architecture, HAMP spans 187–239 (RAGLRPVGRLTQAAERVARTDDLRPIPVFGSDELARLTEAFNMMLRALTESRE). Over 187-515 (RAGLRPVGRL…GKSRSASKEL (329 aa)) the chain is Cytoplasmic. Residues 247 to 467 (DAGHELRTPL…SFYVMLPGRP (221 aa)) form the Histidine kinase domain. At His250 the chain carries Phosphohistidine; by autocatalysis. A disordered region spans residues 468–515 (LTPGGNGTAPVPAAQFDPDMRSAGSRADRRVIKNTETNGKSRSASKEL).

Mg(2+) serves as cofactor. Requires Mn(2+) as cofactor. In terms of processing, autophosphorylated.

It localises to the cell membrane. It carries out the reaction ATP + protein L-histidine = ADP + protein N-phospho-L-histidine.. In terms of biological role, member of the two-component regulatory system MprB/MprA which contributes to maintaining a balance among several systems involved in stress resistance and is required for establishment and maintenance of persistent infection in the host. In response to environmental signals MprB acts both as a membrane-associated protein kinase that undergoes autophosphorylation and subsequently transfers the phosphate to MprA, and a protein phosphatase that dephosphorylates phospho-MprA. This Mycobacterium sp. (strain JLS) protein is Signal transduction histidine-protein kinase/phosphatase MprB (mprB).